The chain runs to 181 residues: Sporozoite-associated mosquito saliva protein 1 (181 aa).

Residues 1–24 (MNSSWRVVVFLGLVILCHSRRARA) form the signal peptide.

In terms of tissue distribution, salivary gland (at protein level). As to expression, (Microbial infection) Detected with Plasmodium berghei sporozoites isolated from the saliva of infected Anopheles gambiae mosquitoes (at protein level).

The protein localises to the secreted. Its function is as follows. Decreases host neutrophil chemotaxis induced by N-formylmethionine-leucyl-phenylalanine (fMLP). In terms of biological role, (Microbial infection) Interacts with the surface of Plasmodium berghei sporozoites. Enhances sporozoite gliding activity. Enhances host hepatocyte traversal by sporozoites. The protein is Sporozoite-associated mosquito saliva protein 1 of Anopheles gambiae (African malaria mosquito).